Consider the following 428-residue polypeptide: Chaperone SurA (428 aa).

An N-terminal signal peptide occupies residues 1–13; that stretch reads MLGALLLSGAVHA. 2 consecutive PpiC domains span residues 164-265 and 276-375; these read SEEF…KLLE and RDEV…EVLG.

The protein resides in the periplasm. It catalyses the reaction [protein]-peptidylproline (omega=180) = [protein]-peptidylproline (omega=0). Chaperone involved in the correct folding and assembly of outer membrane proteins. Recognizes specific patterns of aromatic residues and the orientation of their side chains, which are found more frequently in integral outer membrane proteins. May act in both early periplasmic and late outer membrane-associated steps of protein maturation. In Pseudomonas syringae pv. tomato (strain ATCC BAA-871 / DC3000), this protein is Chaperone SurA.